The following is a 414-amino-acid chain: Tyrosine--tRNA ligase (414 aa).

Tyrosine 38 serves as a coordination point for L-tyrosine. The 'HIGH' region signature appears at proline 43–asparagine 52. L-tyrosine is bound by residues tyrosine 165 and glutamine 169. The short motif at lysine 228–serine 232 is the 'KMSKS' region element. Residue lysine 231 participates in ATP binding. Residues phenylalanine 349 to isoleucine 414 form the S4 RNA-binding domain.

This sequence belongs to the class-I aminoacyl-tRNA synthetase family. TyrS type 1 subfamily. Homodimer.

Its subcellular location is the cytoplasm. It catalyses the reaction tRNA(Tyr) + L-tyrosine + ATP = L-tyrosyl-tRNA(Tyr) + AMP + diphosphate + H(+). Catalyzes the attachment of tyrosine to tRNA(Tyr) in a two-step reaction: tyrosine is first activated by ATP to form Tyr-AMP and then transferred to the acceptor end of tRNA(Tyr). This is Tyrosine--tRNA ligase from Mesomycoplasma hyopneumoniae (strain 7448) (Mycoplasma hyopneumoniae).